Reading from the N-terminus, the 237-residue chain is Homeobox protein Nkx-3.1 (237 aa).

Residues 1–14 (MLRVAEPREPRVEA) show a composition bias toward basic and acidic residues. 2 disordered regions span residues 1 to 96 (MLRV…EPES) and 108 to 130 (EHNP…RSRA). Positions 24 to 34 (PTQSKRLTSFL) are enriched in polar residues. Composition is skewed to basic and acidic residues over residues 38-47 (ILRDRAERHG) and 57-71 (PDPR…DKAG). Positions 125-184 (QKRSRAAFSHTQVIELERKFSHQKYLSAPERAHLAKNLKLTETQVKIWFQNRRYKTKRKQ) form a DNA-binding region, homeobox.

This sequence belongs to the NK-3 homeobox family. As to quaternary structure, interacts with serum response factor (SRF). Interacts with SPDEF. Interacts with WDR77. Interacts with TOPORS which polyubiquitinates NKX3-1 and induces its proteasomal degradation. Interacts with FEM1B. Post-translationally, ubiquitinated by TOPORS; monoubiquitinated at several residues and also polyubiquitinated on single residues. Expressed mostly in the male urogenital tract, with highest expression in the epithelial cells lining the ducts of anterior, dorsolateral and ventral prostate and in the bulbourethral gland, and much lower in the seminal vesicle and the testis. Expression in the prostate increases during sexual maturation and is drastically reduced following castration. Expressed also in brain (hippocampus and external granular layer of the cerebral cortex), kidney (intralobular arteries), thymus and adrenal and salivary glands.

Its subcellular location is the nucleus. Transcription factor, which binds preferentially the consensus sequence 5'-TAAGT[AG]-3' and can behave as a transcriptional repressor. Plays an important role in normal prostate development, regulating proliferation of glandular epithelium and in the formation of ducts in prostate. Acts as a tumor suppressor controlling prostate carcinogenesis, as shown by the ability to suppress growth and tumorigenicity of prostate carcinoma cells. Plays a role in the formation of minor salivary glands (particularly palatine and lingual glands). In Mus musculus (Mouse), this protein is Homeobox protein Nkx-3.1.